Consider the following 272-residue polypeptide: Homeobox protein SIX3 (272 aa).

The homeobox DNA-binding region spans 169–228 (GEQKTHCFKERTRGLLREWYLQDPYPNPGKKRELAHATGLTPTQVGNWFKNRRQRDRAAA). The interval 244 to 272 (CTLSGGDSSERADGDTFLSVTDSDSDLDV) is disordered.

It belongs to the SIX/Sine oculis homeobox family. As to quaternary structure, interacts with GMNN.

It localises to the nucleus. In terms of biological role, transcriptional regulator which can act as both a transcriptional repressor and activator by binding a ATTA homeodomain core recognition sequence on these target genes. During forebrain development represses WNT1 expression allowing zona limitans intrathalamica formation and thereby ensuring proper anterio-posterior patterning of the diencephalon and formation of the rostral diencephalon. Acts as a direct upstream activator of SHH expression in the rostral diencephalon ventral midline and that in turn SHH maintains its expression. In addition, Six3 activity is required for the formation of the telencephalon. During postnatal stages of brain development is necessary for ependymal cell maturation by promoting the maturation of radial glia into ependymal cells through regulation of neuroblast proliferation and migration. Acts on the proliferation and differentiation of neural progenitor cells through activating transcription of CCND1 and CCND2. During early lens formation plays a role in lens induction and specification by activating directly PAX6 in the presumptive lens ectoderm. In turn PAX6 activates SIX3 resulting in activation of PDGFRA and CCND1 promoting cell proliferation. Also is required for the neuroretina development by directly suppressing WNT8B expression in the anterior neural plate territory. Its action during retina development and lens morphogenesis is AES and TLE4-dependent manner. Furthermore, during eye development regulates several genes expression. Before and during early lens development represses the CRYGF promoter by binding a SIX repressor element. Directly activates RHO transcription, or cooperates with CRX or NRL. Six3 also functions in the formation of the proximodistal axis of the optic cup, and promotes the formation of optic vesicles-like structures. During pituitary development, acts in parallel or alternatively with HESX1 to control cell proliferation through Wnt/beta-catenin pathway. Plays a role in eye development by suppressing WNT1 expression and in dorsal-ventral patterning by repressing BMP signaling pathway. This chain is Homeobox protein SIX3 (six3), found in Oryzias latipes (Japanese rice fish).